The sequence spans 477 residues: Ribosomal RNA small subunit methyltransferase F (477 aa).

S-adenosyl-L-methionine contacts are provided by residues 125–131 (AAAPGSK), E149, D176, and D194. The Nucleophile role is filled by C247.

This sequence belongs to the class I-like SAM-binding methyltransferase superfamily. RsmB/NOP family.

It localises to the cytoplasm. The enzyme catalyses cytidine(1407) in 16S rRNA + S-adenosyl-L-methionine = 5-methylcytidine(1407) in 16S rRNA + S-adenosyl-L-homocysteine + H(+). Specifically methylates the cytosine at position 1407 (m5C1407) of 16S rRNA. The chain is Ribosomal RNA small subunit methyltransferase F from Klebsiella pneumoniae (strain 342).